Reading from the N-terminus, the 860-residue chain is Protein argonaute-2 (860 aa).

Y2 carries the post-translational modification 3'-nitrotyrosine. The PAZ domain occupies 230 to 349 (PVIEFVCEVL…LPLEVCNIVA (120 aa)). The segment at 312–317 (YFKDRH) is interaction with guide RNA. Residue S388 is modified to Phosphoserine. A Piwi domain is found at 518–819 (LVVVILPGKT…VAFRARYHLV (302 aa)). Positions 525-567 (GKTPVYAEVKRVGDTVLGMATQCVQMKNVQRTTPQTLSNLCLK) are interaction with guide RNA. Residues 588 to 591 (FQQP) form an interaction with GW182 family members region. D598 provides a ligand contact to a divalent metal cation. The interaction with GW182 family members stretch occupies residues 651 to 661 (LIQFYKSTRFK). D670 is an a divalent metal cation binding site. A 4-hydroxyproline modification is found at P701. Interaction with guide RNA regions lie at residues 710-711 (KR), 754-762 (HAGIQGTSR), and 791-813 (YVRCTRSVSIPAPAYYAHLVAFR). An a divalent metal cation-binding site is contributed by H808. Phosphoserine is present on residues S825, S829, S832, and S835.

Belongs to the argonaute family. Ago subfamily. In terms of assembly, interacts with DICER1 through its Piwi domain and with TARBP2 during assembly of the RNA-induced silencing complex (RISC). Together, DICER1, AGO2 and TARBP2 constitute the trimeric RISC loading complex (RLC), or micro-RNA (miRNA) loading complex (miRLC). Within the RLC/miRLC, DICER1 and TARBP2 are required to process precursor miRNAs (pre-miRNAs) to mature miRNAs and then load them onto AGO2. AGO2 bound to the mature miRNA constitutes the minimal RISC and may subsequently dissociate from DICER1 and TARBP2. Note however that the term RISC has also been used to describe the trimeric RLC/miRLC. The formation of RISC complexes containing siRNAs rather than miRNAs appears to occur independently of DICER1. Interacts with AGO1. Also interacts with DDB1, DDX5, DDX6, DDX20, DHX30, DHX36, DDX47, DHX9, ELAVL, FXR1, GEMIN4, HNRNPF, IGF2BP1, ILF3, IMP8, MATR3, PABPC1, PRMT5, P4HA1, P4HB, RBM4, SART3, TNRC6A, TNRC6B, UPF1 and YBX1. Interacts with the P-body components DCP1A and XRN1. Associates with polysomes and messenger ribonucleoproteins (mNRPs). Interacts with RBM4; the interaction is modulated under stress-induced conditions, occurs under both cell proliferation and differentiation conditions and in an RNA- and phosphorylation-independent manner. Interacts with LIMD1, WTIP and AJUBA. Interacts with TRIM71. Interacts with APOBEC3G in an RNA-dependent manner. Interacts with APOBEC3A, APOBEC3C, APOBEC3F and APOBEC3H. Interacts with DICER1, TARBP2, EIF6, MOV10 and RPL7A (60S ribosome subunit); they form a large RNA-induced silencing complex (RISC). Interacts with FMR1. Interacts with ZFP36. Interacts with RC3H1; the interaction is RNA independent. Interacts with ARB2A. Found in a complex composed of AGO2, CHD7 and ARB2A. Interacts with SND1 and SYT11. Interacts with CLNK. Interacts with GARRE1. Interacts with GRB2; this interaction is important for the formation of a ternary complex containing GRB2, AGO2 and DICER1. It depends on Mg(2+) as a cofactor. Mn(2+) is required as a cofactor. Post-translationally, hydroxylated. 4-hydroxylation appears to enhance protein stability but is not required for miRNA-binding or endonuclease activity. Ubiquitinated on surface-exposed lysines by a SCF-like E3 ubiquitin-protein ligase complex containing ZSWIM8 during target-directed microRNA degradation (TDMD), a process that mediates degradation of microRNAs (miRNAs). Ubiquitination by the SCF-like E3 ubiquitin-protein ligase complex containing ZSWIM8 leads to its subsequent degradation, thereby exposing miRNAs for degradation. ZSWIM8 recognizes and binds AGO2 when it is engaged with a TDMD target. In terms of processing, phosphorylation at Ser-388 by AKT3; leads to up-regulate translational repression of microRNA target and down-regulate endonucleolytic cleavage. Post-translationally, a phosphorylation cycle of C-terminal serine cluster (Ser-825-Ser-835) regulates the release of target mRNAs. Target-binding leads to phosphorylation of these residues by CSNK1A1, which reduces the affinity of AGO2 for mRNA and enables target release. The ANKRD52-PPP6C phosphatase complex dephosphorylates the residues, which primes AGO2 for binding a new target. As to expression, ubiquitous expression in 9.5 day embryos with highest levels in forebrain, heart, limb buds, and branchial arches.

The protein resides in the cytoplasm. Its subcellular location is the P-body. It localises to the nucleus. The catalysed reaction is Endonucleolytic cleavage to 5'-phosphomonoester.. Its function is as follows. Required for RNA-mediated gene silencing (RNAi) by the RNA-induced silencing complex (RISC). The 'minimal RISC' appears to include AGO2 bound to a short guide RNA such as a microRNA (miRNA) or short interfering RNA (siRNA). These guide RNAs direct RISC to complementary mRNAs that are targets for RISC-mediated gene silencing. The precise mechanism of gene silencing depends on the degree of complementarity between the miRNA or siRNA and its target. Binding of RISC to a perfectly complementary mRNA generally results in silencing due to endonucleolytic cleavage of the mRNA specifically by AGO2. Binding of RISC to a partially complementary mRNA results in silencing through inhibition of translation, and this is independent of endonuclease activity. May inhibit translation initiation by binding to the 7-methylguanosine cap, thereby preventing the recruitment of the translation initiation factor eIF4-E. May also inhibit translation initiation via interaction with EIF6, which itself binds to the 60S ribosomal subunit and prevents its association with the 40S ribosomal subunit. The inhibition of translational initiation leads to the accumulation of the affected mRNA in cytoplasmic processing bodies (P-bodies), where mRNA degradation may subsequently occur. In some cases RISC-mediated translational repression is also observed for miRNAs that perfectly match the 3' untranslated region (3'-UTR). Can also up-regulate the translation of specific mRNAs under certain growth conditions. Binds to the AU element of the 3'-UTR of the TNF (TNF-alpha) mRNA and up-regulates translation under conditions of serum starvation. Also required for transcriptional gene silencing (TGS), in which short RNAs known as antigene RNAs or agRNAs direct the transcriptional repression of complementary promoter regions. Regulates lymphoid and erythroid development and function, and this is independent of endonuclease activity. The protein is Protein argonaute-2 (Ago2) of Mus musculus (Mouse).